The chain runs to 303 residues: N-acetyl-D-glucosamine kinase (303 aa).

ATP is bound by residues 4–11 (GFDIGGTK) and 133–140 (GVGGGLVL). Residues His157, Cys177, Cys179, and Cys184 each coordinate Zn(2+).

This sequence belongs to the ROK (NagC/XylR) family. NagK subfamily.

It carries out the reaction N-acetyl-D-glucosamine + ATP = N-acetyl-D-glucosamine 6-phosphate + ADP + H(+). Its pathway is cell wall biogenesis; peptidoglycan recycling. In terms of biological role, catalyzes the phosphorylation of N-acetyl-D-glucosamine (GlcNAc) derived from cell-wall degradation, yielding GlcNAc-6-P. This chain is N-acetyl-D-glucosamine kinase, found in Salmonella choleraesuis (strain SC-B67).